A 108-amino-acid chain; its full sequence is UPF0060 membrane protein Msil_1658 (108 aa).

The next 4 membrane-spanning stretches (helical) occupy residues 5 to 25 (LVYVAAALAEIAGCFSFWAWL), 31 to 51 (SLWLIPGTASLLLFAWLLTLI), 62 to 82 (AYGGVYVTVSLLWLWAMEGVW), and 88 to 108 (LGGATLCLIGAAIIILAPRPA).

The protein belongs to the UPF0060 family.

It localises to the cell inner membrane. This chain is UPF0060 membrane protein Msil_1658, found in Methylocella silvestris (strain DSM 15510 / CIP 108128 / LMG 27833 / NCIMB 13906 / BL2).